Reading from the N-terminus, the 45-residue chain is Ribosome-inactivating protein TAP-29 (45 aa).

This sequence belongs to the ribosome-inactivating protein family. Type 1 RIP subfamily.

The enzyme catalyses Endohydrolysis of the N-glycosidic bond at one specific adenosine on the 28S rRNA.. In terms of biological role, capable of inhibiting HIV-1 infection and replication. It inactivates eukaryotic 60S ribosomal subunits. This chain is Ribosome-inactivating protein TAP-29, found in Trichosanthes kirilowii (Chinese snake gourd).